The sequence spans 312 residues: ECF RNA polymerase sigma factor SigJ (312 aa).

Residues 6–65 form a sigma-70 factor domain-2 region; it reads FEALRQHLMSVAYRLTGTVADAEDIVQEAWLRWDSPDTVIADPRAWLTTVVSRLGLDKLR. Residues 29-32 carry the Polymerase core binding motif; that stretch reads DIVQ. The tract at residues 107–155 is sigma-70 factor domain-4; sequence MVVLERLRPDQRVAFVLHDGFAVPFAEVAEVLGTSEAAARQLASRARKA. A DNA-binding region (H-T-H motif) is located at residues 131-150; that stretch reads FAEVAEVLGTSEAAARQLAS. Residues 293–312 are disordered; sequence GSPLKERRAQPTGRGRHHRN.

The protein belongs to the sigma-70 factor family. ECF subfamily. In terms of assembly, interacts transiently with the RNA polymerase catalytic core formed by RpoA, RpoB, RpoC and RpoZ (2 alpha, 1 beta, 1 beta' and 1 omega subunit) to form the RNA polymerase holoenzyme that can initiate transcription.

In terms of biological role, sigma factors are initiation factors that promote the attachment of RNA polymerase to specific initiation sites and are then released. Extracytoplasmic function (ECF) sigma factors are held in an inactive form by an anti-sigma factor until released, although no anti-sigma factor is known for this protein. Regulates the promoter of SigI, may not be autoregulated. The chain is ECF RNA polymerase sigma factor SigJ (sigJ) from Mycobacterium tuberculosis (strain ATCC 25618 / H37Rv).